The chain runs to 294 residues: Ferredoxin--NADP reductase (294 aa).

Residues 13-137 (KNPYIGKCLS…TGPVGKEMLL (125 aa)) form the FAD-binding FR-type domain. FAD contacts are provided by residues 72-75 (RLYS), 93-95 (CVR), tyrosine 99, 111-113 (VCS), and threonine 152. Residues serine 75 and arginine 95 each contribute to the NADP(+) site. NADP(+)-binding positions include threonine 152, 184–185 (IP), 214–215 (SR), lysine 224, 224–228 (KMYIQ), 253–254 (GL), and glutamate 292.

This sequence belongs to the ferredoxin--NADP reductase type 1 family. FAD is required as a cofactor.

It localises to the cellular thylakoid membrane. The enzyme catalyses 2 reduced [2Fe-2S]-[ferredoxin] + NADP(+) + H(+) = 2 oxidized [2Fe-2S]-[ferredoxin] + NADPH. The polypeptide is Ferredoxin--NADP reductase (petH) (Spirulina sp).